A 61-amino-acid polypeptide reads, in one-letter code: Metallothionein-1M (61 aa).

The segment at methionine 1–cysteine 29 is beta. 20 residues coordinate a divalent metal cation: cysteine 5, cysteine 7, cysteine 13, cysteine 15, cysteine 19, cysteine 21, cysteine 24, cysteine 26, cysteine 29, cysteine 33, cysteine 34, cysteine 36, cysteine 37, cysteine 41, cysteine 44, cysteine 48, cysteine 50, cysteine 57, cysteine 59, and cysteine 60. The alpha stretch occupies residues lysine 30–alanine 61.

It belongs to the metallothionein superfamily. Type 1 family. In terms of assembly, monomer.

Functionally, metallothioneins have a high content of cysteine residues that bind various heavy metals; these proteins are transcriptionally regulated by both heavy metals and glucocorticoids. The chain is Metallothionein-1M (MT1M) from Homo sapiens (Human).